A 289-amino-acid polypeptide reads, in one-letter code: Bifunctional protein FolD (289 aa).

Residues 166–168, Ser-191, and Ile-232 contribute to the NADP(+) site; that span reads GRS.

The protein belongs to the tetrahydrofolate dehydrogenase/cyclohydrolase family. In terms of assembly, homodimer.

The enzyme catalyses (6R)-5,10-methylene-5,6,7,8-tetrahydrofolate + NADP(+) = (6R)-5,10-methenyltetrahydrofolate + NADPH. It carries out the reaction (6R)-5,10-methenyltetrahydrofolate + H2O = (6R)-10-formyltetrahydrofolate + H(+). It functions in the pathway one-carbon metabolism; tetrahydrofolate interconversion. Catalyzes the oxidation of 5,10-methylenetetrahydrofolate to 5,10-methenyltetrahydrofolate and then the hydrolysis of 5,10-methenyltetrahydrofolate to 10-formyltetrahydrofolate. The sequence is that of Bifunctional protein FolD from Synechococcus elongatus (strain ATCC 33912 / PCC 7942 / FACHB-805) (Anacystis nidulans R2).